The primary structure comprises 269 residues: Glutamate racemase (269 aa).

Substrate-binding positions include 7–8 and 39–40; these read DS and YG. The Proton donor/acceptor role is filled by cysteine 70. 71–72 serves as a coordination point for substrate; the sequence is NT. The active-site Proton donor/acceptor is the cysteine 194. 195–196 serves as a coordination point for substrate; it reads TH.

This sequence belongs to the aspartate/glutamate racemases family.

It catalyses the reaction L-glutamate = D-glutamate. Its pathway is cell wall biogenesis; peptidoglycan biosynthesis. Its function is as follows. Provides the (R)-glutamate required for cell wall biosynthesis. The chain is Glutamate racemase from Ruegeria sp. (strain TM1040) (Silicibacter sp.).